The chain runs to 332 residues: Ribonucleoside-diphosphate reductase small chain C (332 aa).

Fe cation-binding residues include Asp-76, Glu-107, and His-110. The active site involves Tyr-114. Residues Glu-169, Glu-203, and His-206 each coordinate Fe cation.

This sequence belongs to the ribonucleoside diphosphate reductase small chain family. In terms of assembly, homodimer and heterodimer with RNR2A. Heterotetramer of two R1 and two R2 chains. Interacts with CSN7 (via C-terminal tail). The cofactor is Fe cation. Expressed in roots, cauline and rosette leaves, stems and flowers.

The protein localises to the cytoplasm. It is found in the nucleus. It carries out the reaction a 2'-deoxyribonucleoside 5'-diphosphate + [thioredoxin]-disulfide + H2O = a ribonucleoside 5'-diphosphate + [thioredoxin]-dithiol. In terms of biological role, provides the precursors necessary for DNA synthesis. Catalyzes the biosynthesis of deoxyribonucleotides from the corresponding ribonucleotides. Involved in DNA damage repair and programmed cell death inhibition. The sequence is that of Ribonucleoside-diphosphate reductase small chain C (TSO2) from Arabidopsis thaliana (Mouse-ear cress).